Here is a 148-residue protein sequence, read N- to C-terminus: MGQFIFVSFGLLVVLLSLSGAGAGFCCPLGWSSYDLYCYKVFKQQMNWTDAEKFCTEQHTGSHLVSFHSSEEADFVVNMTYPILKLDFVWIGLSNVWNQCNSEWSDGTKLDYKDWSGESECIASKTVENQWWTKSCSRTHYVVCKFQA.

Positions 1-23 (MGQFIFVSFGLLVVLLSLSGAGA) are cleaved as a signal peptide. Cysteines 27 and 38 form a disulfide. The C-type lectin domain maps to 34–145 (YDLYCYKVFK…CSRTHYVVCK (112 aa)). Residues N47 and N78 are each glycosylated (N-linked (GlcNAc...) asparagine). 2 cysteine pairs are disulfide-bonded: C55-C144 and C121-C136.

This sequence belongs to the snaclec family. In terms of assembly, heteromultimer; disulfide-linked. As to expression, expressed by the venom gland.

The protein localises to the secreted. In terms of biological role, interferes with one step of hemostasis (modulation of platelet aggregation, or coagulation cascade, for example). This chain is Snaclec stejaggregin-A subunit beta-2, found in Trimeresurus stejnegeri (Chinese green tree viper).